A 225-amino-acid polypeptide reads, in one-letter code: Mediator of RNA polymerase II transcription subunit 8 (225 aa).

Residues 1 to 24 (MNSIHSANSNTVSTSEINTSQIPT) form a disordered region. Positions 170–204 (VEELKYLDSEDEKKETEENKKIENQKYEEELKITA) form a coiled coil.

This sequence belongs to the Mediator complex subunit 8 family. Component of the Mediator complex.

The protein localises to the nucleus. In terms of biological role, component of the Mediator complex, a coactivator involved in the regulated transcription of nearly all RNA polymerase II-dependent genes. Mediator functions as a bridge to convey information from gene-specific regulatory proteins to the basal RNA polymerase II transcription machinery. Mediator is recruited to promoters by direct interactions with regulatory proteins and serves as a scaffold for the assembly of a functional preinitiation complex with RNA polymerase II and the general transcription factors. This Debaryomyces hansenii (strain ATCC 36239 / CBS 767 / BCRC 21394 / JCM 1990 / NBRC 0083 / IGC 2968) (Yeast) protein is Mediator of RNA polymerase II transcription subunit 8 (MED8).